The sequence spans 282 residues: N-methyltransferase gliN (282 aa).

It belongs to the methyltransferase superfamily. LaeA methyltransferase family.

It functions in the pathway mycotoxin biosynthesis. N-methyltransferase; part of the gene cluster that mediates the biosynthesis of gliotoxin, a member of the epipolythiodioxopiperazine (ETP) class of toxins characterized by a disulfide bridged cyclic dipeptide. The first step in gliotoxin biosynthesis is the condensation of serine and phenylalanine to form the cyclo-L-phenylalanyl-L-serine diketopiperazine (DKP) by the NRPS gliP. GliP is also able to produce the DKP cyclo-L-tryptophanyl-L-serine, suggesting that the substrate specificity of the first adenylation (A) domain in gliP is sufficiently relaxed to accommodate both L-Phe and L-Trp. The cytochrome P450 monooxygenase gliC has been shown to catalyze the subsequent hydroxylation of the alpha-carbon of L-Phe in cyclo-L-phenylalanyl-L-serine whereas the second cytochrome P450 enzyme, gliF, is presumably involved in the modification of the DKP side chain. The glutathione S-transferase (GST) gliG then forms a bis-glutathionylated biosynthetic intermediate which is responsible for the sulfurization of gliotoxin. This bis-glutathionylated intermediate is subsequently processed by the gamma-glutamyl cyclotransferase gliK to remove both gamma-glutamyl moieties. Subsequent processing via gliI yields a biosynthetic intermediate, which is N-methylated via the N-methyltransferase gliN, before the gliotoxin oxidoreductase gliT-mediated disulfide bridge closure. GliN-mediated amide methylation confers stability to ETP, damping the spontaneous formation of tri- and tetrasulfides. Intracellular dithiol gliotoxin oxidized by gliT is subsequently effluxed by gliA. Gliotoxin contributes to pathogenesis during invasive aspergillosis. In macrophages and neutrophils, gliotoxin showed inhibition of various different cell functions including cytokine production, antigen presentation, phagocytosis, and production of reactive oxygen species. The chain is N-methyltransferase gliN from Aspergillus fumigatus (strain ATCC MYA-4609 / CBS 101355 / FGSC A1100 / Af293) (Neosartorya fumigata).